A 586-amino-acid polypeptide reads, in one-letter code: Succinate dehydrogenase flavoprotein subunit (586 aa).

FAD contacts are provided by residues 10–15 (GGGLAG) and 33–48 (SIVPVKRSHSVCAQGG). The residue at position 41 (histidine 41) is a Tele-8alpha-FAD histidine. Substrate-binding residues include histidine 236 and serine 250. Arginine 285 functions as the Proton acceptor in the catalytic mechanism. Histidine 352 is a binding site for substrate. An FAD-binding site is contributed by glutamate 376. Residue arginine 386 participates in substrate binding. An FAD-binding site is contributed by 391–392 (SL).

This sequence belongs to the FAD-dependent oxidoreductase 2 family. FRD/SDH subfamily. In terms of assembly, in B.subtilis succinate dehydrogenase forms part of an enzyme complex containing three subunits: a flavoprotein, an iron-sulfur protein and cytochrome b-558. Interacts with FloT. It depends on FAD as a cofactor.

Its subcellular location is the cell membrane. The protein resides in the membrane raft. The catalysed reaction is a quinone + succinate = fumarate + a quinol. It functions in the pathway carbohydrate metabolism; tricarboxylic acid cycle; fumarate from succinate (bacterial route): step 1/1. This Bacillus subtilis (strain 168) protein is Succinate dehydrogenase flavoprotein subunit (sdhA).